The following is a 385-amino-acid chain: Probable thioesterase PNKD (385 aa).

A disordered region spans residues 32-58; the sequence is KASHNRTRALQSHSSPEGKEEPEPLSP. The Zn(2+) site is built by H172, H174, D176, H177, H229, D253, and H291.

It belongs to the metallo-beta-lactamase superfamily. Glyoxalase II family. In terms of assembly, isoform 2 interacts with the sarcomeric proteins, MRLC2, MYOM1 and ENO3. The cofactor is Zn(2+). Undergoes cleavage at the N-terminus. Isoform 1 is only expressed in the brain. Isoform 2 is ubiquitously detected with highest expression in skeletal muscle and detected in myocardial myofibrils.

The protein resides in the cell membrane. It localises to the mitochondrion. The protein localises to the cytoplasm. It is found in the golgi apparatus. Its subcellular location is the endoplasmic reticulum. The enzyme catalyses a thioester + H2O = a thiol + a carboxylate + H(+). Its function is as follows. Probable thioesterase that may play a role in cellular detoxification processes; it likely acts on a yet-unknown alpha-hydroxythioester substrate. In vitro, it is able to catalyze the hydrolysis of S-D-lactoyl-glutathione to form glutathione and D-lactic acid at very low rate, though this reaction is not physiologically relevant in vivo. The polypeptide is Probable thioesterase PNKD (PNKD) (Homo sapiens (Human)).